Reading from the N-terminus, the 147-residue chain is Allograft inflammatory factor 1 (147 aa).

Ser-2 carries the post-translational modification N-acetylserine. Position 11 is an N6-acetyllysine (Lys-11). Position 39 is a phosphoserine (Ser-39). The region spanning 45–80 is the EF-hand 1 domain; it reads SKLEAFKTKYMEFDLNGNGDIDIMSLKRMLEKLGVP. The Ca(2+) site is built by Asp-58, Asn-60, Asn-62, Asp-64, Glu-98, Thr-100, and Asp-105. The EF-hand 2; degenerate domain maps to 81 to 115; the sequence is KTHLELKKLIREVSSGSEETFSYSDFLRMMLGKRS. The interval 127–147 is disordered; sequence KNKEHQKPTGPPAKKAISELP.

In terms of assembly, homodimer (Potential). Monomer. Interacts with LCP1. Cardiac allograft, spleen and testis. Expressed by inflammatory cells (macrophages and neutrophils).

The protein resides in the cytoplasm. It is found in the cytoskeleton. The protein localises to the cell projection. It localises to the ruffle membrane. Its subcellular location is the phagocytic cup. In terms of biological role, actin-binding protein that enhances membrane ruffling and RAC activation. Enhances the actin-bundling activity of LCP1. Binds calcium. Plays a role in RAC signaling and in phagocytosis. May play an role in macrophage activation and function. Promotes the proliferation of vascular smooth muscle cells and of T-lymphocytes. Enhances lymphocyte migration. Plays a role in vascular inflammation. The sequence is that of Allograft inflammatory factor 1 (Aif1) from Rattus norvegicus (Rat).